Here is a 339-residue protein sequence, read N- to C-terminus: NADPH dehydrogenase (339 aa).

21–24 (PPMC) is an FMN binding site. Y26 contacts substrate. Residues A57 and Q99 each coordinate FMN. Substrate is bound at residue 162–165 (HGAH). FMN-binding positions include R215 and 307-308 (GR).

It belongs to the NADH:flavin oxidoreductase/NADH oxidase family. NamA subfamily. In terms of assembly, homotetramer. Requires FMN as cofactor.

The catalysed reaction is A + NADPH + H(+) = AH2 + NADP(+). Functionally, catalyzes the reduction of the double bond of an array of alpha,beta-unsaturated aldehydes and ketones. It also reduces the nitro group of nitroester and nitroaromatic compounds. It could have a role in detoxification processes. This chain is NADPH dehydrogenase, found in Clostridium acetobutylicum (strain ATCC 824 / DSM 792 / JCM 1419 / IAM 19013 / LMG 5710 / NBRC 13948 / NRRL B-527 / VKM B-1787 / 2291 / W).